Here is a 245-residue protein sequence, read N- to C-terminus: CMRF35-like molecule 3 (245 aa).

A signal peptide spans 1–18; that stretch reads MWQFPALLFLFLPGCCTA. An Ig-like V-type domain is found at 19–124; that stretch reads QDPVTGPEEV…TDPMFKVNVN (106 aa). The Extracellular portion of the chain corresponds to 19–189; it reads QDPVTGPEEV…FIWSLLSSIS (171 aa). Cys-40 and Cys-108 are oxidised to a cystine. 2 important for maintaining surface expression and for interaction with FCER1G regions span residues 177–182 and 189–198; these read NSLFIW and SFLLMVFVVV. Residues 190–210 traverse the membrane as a helical segment; it reads FLLMVFVVVPLLLSMLSAVLW. The Cytoplasmic segment spans residues 211–245; the sequence is VNRPQRHYGGGEIGLVETHRSDALDGEKHFPGDEK.

The protein belongs to the CD300 family. Interacts with FCER1G; the interaction may be indirect. Interacts with TLR9. Highly expressed in bone marrow-derived mast cells and macrophages, peripheral blood monocytes and CD11c+ cells, with weaker expression detected in CD11b cells in bone marrow and peripheral blood. Not detected in B220+ cells in bone marrow or spleen, in Thy-1.2+ or CD3+ cells in peripheral blood, spleen or thymus, or in NK1.1+ cells in spleen (at protein level). Widely expressed in various tissues including heart, liver, spleen, lung, kidney, brain, bone marrow, thymus, axillary lymph node and mesenteric lymph node. Highly expressed in macrophage cell lines J774.1 and RAW 264.7 and in mast cell line MC/9. Weak expression detected in B-lineage cell lines WEHI-231 and A20 and in dendritic cell line DC2.4. Not detected in other myeloid cell lines or T-lineage cell lines.

Its subcellular location is the cell membrane. It is found in the early endosome. It localises to the lysosome. Its function is as follows. Acts as an activating receptor inducing cytokine production in mast cells. Can act as a positive regulator of TLR9 signaling in macrophages, leading to enhanced production of pro-inflammatory cytokines. The polypeptide is CMRF35-like molecule 3 (Mus musculus (Mouse)).